The primary structure comprises 288 residues: Octanoyl-[GcvH]:protein N-octanoyltransferase (288 aa).

Residues 44–253 (AGGPPTFRLW…VLESAMGPQV (210 aa)) form the BPL/LPL catalytic domain. The active-site Acyl-thioester intermediate is the Cys-148. Positions 269–288 (GREGASETDPRRVAYGVDRP) are disordered. Residues 272 to 288 (GASETDPRRVAYGVDRP) show a composition bias toward basic and acidic residues.

Belongs to the octanoyltransferase LipL family.

The catalysed reaction is N(6)-octanoyl-L-lysyl-[glycine-cleavage complex H protein] + L-lysyl-[lipoyl-carrier protein] = N(6)-octanoyl-L-lysyl-[lipoyl-carrier protein] + L-lysyl-[glycine-cleavage complex H protein]. It participates in protein modification; protein lipoylation via endogenous pathway; protein N(6)-(lipoyl)lysine from octanoyl-[acyl-carrier-protein]. In terms of biological role, catalyzes the amidotransfer (transamidation) of the octanoyl moiety from octanoyl-GcvH to the lipoyl domain of the E2 subunit of lipoate-dependent enzymes. This chain is Octanoyl-[GcvH]:protein N-octanoyltransferase, found in Kyrpidia tusciae (strain DSM 2912 / NBRC 15312 / T2) (Bacillus tusciae).